The sequence spans 407 residues: MKRTFIMVLDSFGIGASADAKKFGDEGADTLGHIAEACARGEANVGRSGPLTLPNLSRLGLGKAAEESTGTFPVGLDKNADIIGAYGYASELSSGKDTPSGHWEIAGVPVLFDWGYFSDVENSFPQELLDKLVKRANLPGYLGNCHSSGTVILDQLGEEHMKTGKPIFYTSADSVFQIACHEETFGLDRLYELCEIAREELTDGGYNIGRVIARPFIGDKPGHFQRTGNRHDLAVEPPAPTMLKKLVDEKGGEVVSIGKIADIYAQVGITQKVKATGLDALFDATIEEMKKAGDNTIVFTNFVDFDSSYGHRRDVAGYAAALELFDRRLPELMALVKEDDILILTADHGCDPTWPGTDHTREHIPVLVYGPKVKPGSLGHRETFADIGQTVAAYFGLSPMDYGKNML.

Mn(2+) is bound by residues Asp-10, Asp-306, His-311, Asp-347, His-348, and His-359.

It belongs to the phosphopentomutase family. The cofactor is Mn(2+).

Its subcellular location is the cytoplasm. It catalyses the reaction 2-deoxy-alpha-D-ribose 1-phosphate = 2-deoxy-D-ribose 5-phosphate. The catalysed reaction is alpha-D-ribose 1-phosphate = D-ribose 5-phosphate. Its pathway is carbohydrate degradation; 2-deoxy-D-ribose 1-phosphate degradation; D-glyceraldehyde 3-phosphate and acetaldehyde from 2-deoxy-alpha-D-ribose 1-phosphate: step 1/2. Isomerase that catalyzes the conversion of deoxy-ribose 1-phosphate (dRib-1-P) and ribose 1-phosphate (Rib-1-P) to deoxy-ribose 5-phosphate (dRib-5-P) and ribose 5-phosphate (Rib-5-P), respectively. The polypeptide is Phosphopentomutase (Yersinia pseudotuberculosis serotype O:1b (strain IP 31758)).